The primary structure comprises 319 residues: MKPENKLPVLDLISAEMKTVVNTLQPDLPSWPATGTIAEQRQYYTLERRFWNAGAPEMATRAYMVPTKYGQVETRLFCPQPDSPATLFYLHGGGFILGNLDTHDRIMRLLASYSQCTVIGIDYPLSPEARFPQAIEEIVAACCYFHQQAEDYQINMSRIGFAGDSAGAMLALASALWLRDKQIDCGKIAGVLLWYGLYGLRDSVTRRLLGGVWDGLTQQDLQMYEEAYLSNDADRESPYYCLFNNDLTREVPPCFIAGAEFDPLLDDSRLLYQTLAAHQQPCEFKLYPGTLHVFLHYSRMMKTADEALRDGAQFFTAQL.

The short motif at 91-93 (HGG) is the Involved in the stabilization of the negatively charged intermediate by the formation of the oxyanion hole element. Active-site residues include serine 165, aspartate 262, and histidine 292.

Belongs to the 'GDXG' lipolytic enzyme family. As to quaternary structure, homodimer. Interacts with MalT and MelA.

It is found in the cytoplasm. In terms of biological role, displays esterase activity towards short chain fatty esters (acyl chain length of up to 8 carbons). Able to hydrolyze triacetylglycerol (triacetin) and tributyrylglycerol (tributyrin), but not trioleylglycerol (triolein) or cholesterol oleate. Negatively regulates MalT activity by antagonizing maltotriose binding. Inhibits MelA galactosidase activity. The polypeptide is Acetyl esterase (Shigella boydii serotype 18 (strain CDC 3083-94 / BS512)).